A 405-amino-acid polypeptide reads, in one-letter code: Elongation factor Tu (405 aa).

Positions 10–215 (KPHVNVGTIG…AVDSYIPTPE (206 aa)) constitute a tr-type G domain. The interval 19 to 26 (GHVDHGKT) is G1. GTP is bound at residue 19 to 26 (GHVDHGKT). Threonine 26 contacts Mg(2+). Residues 61 to 65 (GITIN) form a G2 region. The interval 82 to 85 (DCPG) is G3. GTP is bound by residues 82-86 (DCPGH) and 137-140 (NKVD). The tract at residues 137-140 (NKVD) is G4. The interval 175-177 (SAL) is G5.

This sequence belongs to the TRAFAC class translation factor GTPase superfamily. Classic translation factor GTPase family. EF-Tu/EF-1A subfamily. In terms of assembly, monomer.

Its subcellular location is the cytoplasm. The catalysed reaction is GTP + H2O = GDP + phosphate + H(+). In terms of biological role, GTP hydrolase that promotes the GTP-dependent binding of aminoacyl-tRNA to the A-site of ribosomes during protein biosynthesis. In Deinonema sp, this protein is Elongation factor Tu.